The following is a 271-amino-acid chain: Small ribosomal subunit protein uS2 (271 aa).

A disordered region spans residues 235–271 (FDAKNPLKPQNYNAPNKRPYQDSPRKPSYQNQNQNQI). A compositionally biased stretch (polar residues) spans 262 to 271 (SYQNQNQNQI).

Belongs to the universal ribosomal protein uS2 family.

The polypeptide is Small ribosomal subunit protein uS2 (Onion yellows phytoplasma (strain OY-M)).